A 277-amino-acid polypeptide reads, in one-letter code: 4-hydroxy-tetrahydrodipicolinate reductase (277 aa).

9 to 14 (GATGRM) is a binding site for NAD(+). NADP(+) is bound at residue K37. 75–77 (GTS) serves as a coordination point for NAD(+). Residue H132 is the Proton donor/acceptor of the active site. Residue K136 is the Proton donor of the active site. Position 142 to 143 (142 to 143 (GT)) interacts with (S)-2,3,4,5-tetrahydrodipicolinate. Residues 245–277 (SRERATQTAPTGAASGPVDDGGPSGQAATVTSA) are disordered.

It belongs to the DapB family.

Its subcellular location is the cytoplasm. It carries out the reaction (S)-2,3,4,5-tetrahydrodipicolinate + NAD(+) + H2O = (2S,4S)-4-hydroxy-2,3,4,5-tetrahydrodipicolinate + NADH + H(+). The catalysed reaction is (S)-2,3,4,5-tetrahydrodipicolinate + NADP(+) + H2O = (2S,4S)-4-hydroxy-2,3,4,5-tetrahydrodipicolinate + NADPH + H(+). The protein operates within amino-acid biosynthesis; L-lysine biosynthesis via DAP pathway; (S)-tetrahydrodipicolinate from L-aspartate: step 4/4. Functionally, catalyzes the conversion of 4-hydroxy-tetrahydrodipicolinate (HTPA) to tetrahydrodipicolinate. This chain is 4-hydroxy-tetrahydrodipicolinate reductase, found in Clavibacter sepedonicus (Clavibacter michiganensis subsp. sepedonicus).